The chain runs to 336 residues: Retinol dehydrogenase 14 (336 aa).

T5 carries the post-translational modification Phosphothreonine. 50–56 is an NADP(+) binding site; that stretch reads GANSGLG. Residue S192 participates in substrate binding. Y217 (proton acceptor) is an active-site residue.

This sequence belongs to the short-chain dehydrogenases/reductases (SDR) family. In terms of tissue distribution, widely expressed.

It carries out the reaction all-trans-retinol + NADP(+) = all-trans-retinal + NADPH + H(+). The catalysed reaction is 9-cis-retinol + NADP(+) = 9-cis-retinal + NADPH + H(+). It catalyses the reaction 11-cis-retinol + NADP(+) = 11-cis-retinal + NADPH + H(+). The protein operates within cofactor metabolism; retinol metabolism. Functionally, retinol dehydrogenase with a clear preference for NADP. Displays high activity towards 9-cis, 11-cis and all-trans-retinol. Shows a very weak activity towards 13-cis-retinol. Has no activity towards steroid. This Homo sapiens (Human) protein is Retinol dehydrogenase 14 (RDH14).